The chain runs to 356 residues: L-Ala-D/L-Glu epimerase (356 aa).

Substrate is bound at residue 161–163 (KVK). Residues Asp-191, Glu-219, and Asp-244 each contribute to the Mg(2+) site. Substrate is bound by residues Lys-268 and 320–322 (DLD).

This sequence belongs to the mandelate racemase/muconate lactonizing enzyme family. Mg(2+) is required as a cofactor.

The enzyme catalyses L-alanyl-L-glutamate = L-alanyl-D-glutamate. Functionally, dipeptide epimerase with a preference for substrates containing a Glu residue in the second position. Catalyzes the epimerization of L-Ala-L-Glu, L-Ser-L-Glu, L-Thr-L-Glu, L-Val-L-Glu, L-Gly-L-Glu and L-Thr-L-Glu (in vitro). May play a role in the metabolism of the murein peptide, of which L-Ala-D-Glu is a component. In Francisella tularensis subsp. novicida (strain U112), this protein is L-Ala-D/L-Glu epimerase.